We begin with the raw amino-acid sequence, 431 residues long: MRLLVRPEEEELERVLRRSEMDVTEVLPDVERIFEDVVERGDEALLEYTERFDGVKLEAEDLRVSEDDFEVARELVDERTVEALEEAAHRIEEFHRKTLPRVDRITFDVEGTECGLTLRPIPRVGCYVPGGRAAYPSTALMTVIPARVAGCREVVVCTPPADNDVRASPEVLVAVEIAGADAVYRVGGAQAIAALAAGTETVLRVDKIVGPGNVYVTAAKLLAYSRGLTDVDMPAGPSEVFVIADDSANPDWLARDLIAQAEHDPHAAAVLATDSEEIARAVKERVEELLDAGIEREEIVLKALDRNGWIVVLDSLEECVRLANRYAPEHLQLCVENPEELLQDVENAGAVFVGHLTAVPFGDYATGPNHVLPTGGFARARGALGTWDFVKIIPIQRLREGDVERLAPIVEELAEREGLPNHAEAVRARRS.

NAD(+) is bound by residues Tyr127, Gln190, and Asn213. Substrate-binding residues include Ser238, Gln260, and His263. Gln260 and His263 together coordinate Zn(2+). Catalysis depends on proton acceptor residues Glu329 and His330. 4 residues coordinate substrate: His330, Asp363, Glu417, and His422. Asp363 is a Zn(2+) binding site. Residue His422 participates in Zn(2+) binding.

It belongs to the histidinol dehydrogenase family. It depends on Zn(2+) as a cofactor.

It carries out the reaction L-histidinol + 2 NAD(+) + H2O = L-histidine + 2 NADH + 3 H(+). Its pathway is amino-acid biosynthesis; L-histidine biosynthesis; L-histidine from 5-phospho-alpha-D-ribose 1-diphosphate: step 9/9. In terms of biological role, catalyzes the sequential NAD-dependent oxidations of L-histidinol to L-histidinaldehyde and then to L-histidine. In Methanopyrus kandleri (strain AV19 / DSM 6324 / JCM 9639 / NBRC 100938), this protein is Histidinol dehydrogenase.